We begin with the raw amino-acid sequence, 353 residues long: 4-hydroxy-2-oxovalerate aldolase 1 (353 aa).

The region spanning 14 to 266 (VRMTDTSLRD…KTGIDFFDIA (253 aa)) is the Pyruvate carboxyltransferase domain. Residue 22-23 (RD) coordinates substrate. Mn(2+) is bound at residue Asp23. His26 acts as the Proton acceptor in catalysis. Substrate is bound by residues Ser176 and His205. Positions 205 and 207 each coordinate Mn(2+). Position 296 (Tyr296) interacts with substrate.

The protein belongs to the 4-hydroxy-2-oxovalerate aldolase family.

The catalysed reaction is (S)-4-hydroxy-2-oxopentanoate = acetaldehyde + pyruvate. This chain is 4-hydroxy-2-oxovalerate aldolase 1, found in Mycobacterium sp. (strain KMS).